A 223-amino-acid polypeptide reads, in one-letter code: Dephospho-CoA kinase (223 aa).

The region spanning 22-223 is the DPCK domain; that stretch reads LIGLSGPSCS…LLQEVKKRGF (202 aa). 30–35 lines the ATP pocket; sequence CSGKNT.

This sequence belongs to the CoaE family.

The protein localises to the cytoplasm. The enzyme catalyses 3'-dephospho-CoA + ATP = ADP + CoA + H(+). The protein operates within cofactor biosynthesis; coenzyme A biosynthesis; CoA from (R)-pantothenate: step 5/5. Catalyzes the phosphorylation of the 3'-hydroxyl group of dephosphocoenzyme A to form coenzyme A. In Treponema denticola (strain ATCC 35405 / DSM 14222 / CIP 103919 / JCM 8153 / KCTC 15104), this protein is Dephospho-CoA kinase.